The sequence spans 566 residues: Putative ABC transporter ATP-binding protein lp_0149 (566 aa).

ABC transporter domains lie at I6–E247 and L302–A536. ATP contacts are provided by residues G40–S47 and G335–S342.

The protein belongs to the ABC transporter superfamily.

The protein resides in the cell membrane. Its function is as follows. Probably part of an ABC transporter complex. Responsible for energy coupling to the transport system. The chain is Putative ABC transporter ATP-binding protein lp_0149 from Lactiplantibacillus plantarum (strain ATCC BAA-793 / NCIMB 8826 / WCFS1) (Lactobacillus plantarum).